Reading from the N-terminus, the 886-residue chain is Neurotrophin 1 (886 aa).

Positions methionine 1–alanine 29 are cleaved as a signal peptide. A propeptide spanning residues aspartate 30–arginine 498 is cleaved from the precursor. N-linked (GlcNAc...) asparagine glycans are attached at residues asparagine 267 and asparagine 317. A disordered region spans residues phenylalanine 321–serine 340. Residue asparagine 353 is glycosylated (N-linked (GlcNAc...) asparagine). The tract at residues arginine 369–lysine 436 is disordered. Residues methionine 508–valine 597 enclose the Spaetzle domain. 3 disulfide bridges follow: cysteine 509/cysteine 564, cysteine 546/cysteine 593, and cysteine 553/cysteine 595. Residue asparagine 623 is glycosylated (N-linked (GlcNAc...) asparagine). Disordered stretches follow at residues proline 675 to arginine 754 and valine 789 to glutamine 886. Low complexity predominate over residues tyrosine 698–serine 710. The span at proline 797 to proline 807 shows a compositional bias: pro residues. 2 stretches are compositionally biased toward basic residues: residues histidine 815–histidine 827 and serine 874–glutamine 886.

As to quaternary structure, homodimer; disulfide-linked. As to expression, detected in the fan-shaped body which is a component of the locomotion center in the central nervous system (CNS) (at protein level). Expressed in the optic lobes and brain.

In terms of biological role, neurotrophin which may function as a ligand for the Toll-related receptors Toll-7 and Tollo. Binds to Toll-7 and probably acts as its ligand in promoting motor axon targeting and neuronal survival in the central nervous system (CNS). Involved in synaptic targeting of ISNb/d motorneurons and also some SNa motorneurons. In larvae, involved in the negative regulation of the tracheal immune response to bacterial infection perhaps by acting as a ligand for the Toll-related receptor Tollo. May be involved in the normal development of specific neurons at the neuromuscular junction. This Drosophila melanogaster (Fruit fly) protein is Neurotrophin 1.